Consider the following 257-residue polypeptide: MYNLKNQVIVITGSSSGIGLAASTIALSSGAKVFGVDIRPPPSTLTSQSNYACLQYDLSSSSTVSDIVAACEGAFGPRIDGLLNIAGVMDLNQSADTLADEIWERCIAVNLTAPVKLMREVLPVMQRQGGGSIVNVASKAALSGAVSGVAYTASKHGLVGATKNVAWRFKHERIRCNVVCPGGVGATSIRDGVDVTQFDAAALETMALIHQAHGCDREKGVELQPQDIAHMLLFLLDERSRGVSGAVIPVDNAWSTI.

The NADP(+) site is built by Ile-11, Asp-57, Arg-119, Tyr-151, Lys-155, and Val-184. Tyr-151 (proton acceptor) is an active-site residue. The active-site Lowers pKa of active site Tyr is Lys-155.

This sequence belongs to the short-chain dehydrogenases/reductases (SDR) family.

Its pathway is secondary metabolite biosynthesis; terpenoid biosynthesis. In terms of biological role, short chain dehydrogenase; part of the gene cluster that mediates the biosynthesis of calidodehydroaustin, a fungal meroterpenoid. The first step of the pathway is the synthesis of 3,5-dimethylorsellinic acid by the polyketide synthase ausA. 3,5-dimethylorsellinic acid is then prenylated by the polyprenyl transferase ausN. Further epoxidation by the FAD-dependent monooxygenase ausM and cyclization by the probable terpene cyclase ausL lead to the formation of protoaustinoid A. Protoaustinoid A is then oxidized to spiro-lactone preaustinoid A3 by the combined action of the FAD-binding monooxygenases ausB and ausC, and the dioxygenase ausE. Acid-catalyzed keto-rearrangement and ring contraction of the tetraketide portion of preaustinoid A3 by ausJ lead to the formation of preaustinoid A4. The aldo-keto reductase ausK, with the help of ausH, is involved in the next step by transforming preaustinoid A4 into isoaustinone which is in turn hydroxylated by the P450 monooxygenase ausI to form austinolide. The cytochrome P450 monooxygenase ausG modifies austinolide to austinol. Austinol is further acetylated to austin by the O-acetyltransferase ausP, which spontaneously changes to dehydroaustin. The cytochrome P450 monooxygenase ausR then converts dehydroaustin is into 7-dehydrodehydroaustin. The hydroxylation catalyzed by ausR permits the O-acetyltransferase ausQ to add an additional acetyl group to the molecule, leading to the formation of acetoxydehydroaustin. The short chain dehydrogenase ausT catalyzes the reduction of the double bond present between carbon atoms 1 and 2 to convert 7-dehydrodehydroaustin into 1,2-dihydro-7-hydroxydehydroaustin. AusQ catalyzes not only an acetylation reaction but also the addition of the PKS ausV diketide product to 1,2-dihydro-7-hydroxydehydroaustin, forming precalidodehydroaustin. Finally, the iron/alpha-ketoglutarate-dependent dioxygenase converts precalidodehydroaustin into calidodehydroaustin. The polypeptide is Short chain dehydrogenase ausX (Aspergillus calidoustus).